Here is a 423-residue protein sequence, read N- to C-terminus: MKAELIAVGTEILTGQIVNTNAQFLSEKMAELGIDVYFQTAVGDNEERLLSVITTASQRSDLVILCGGLGPTKDDLTKQTLAKYLRRDLVYDEQACQKLDDFFAKRKPSSRTPNNERQAQVIEGSIPLPNKTGLAVGGFITVDGISYVVLPGPPSELKPMVNEELVPLLSKQYSTLYSKVLRFFGIGESQLVTVLSDFIENQTDPTIAPYAKTGEVTLRLSTKTENQALADKKLGQLEAQLLSRKTLEGQPLADVFYGYGEDNSLARETFELLVKYDKSITAAESLTAGLFQSTLASFPGASQVFNGGFVTYSMEEKAKMLGLPLEELKSHGVVSAYTAEGMAEQARLLTGADIGVSLTGVAGPDMLEEQPAGTVFIGLATQNKVESIKVLISGRSRLDVCYIATLHAFNMVRKTLLKLENLL.

This sequence belongs to the CinA family.

The protein is Putative competence-damage inducible protein of Streptococcus pyogenes serotype M3 (strain ATCC BAA-595 / MGAS315).